The following is a 1052-amino-acid chain: Multidrug resistance protein MdtB (1052 aa).

11 helical membrane passes run 15–37, 345–362, 367–389, 396–418, 438–460, 472–494, 535–557, 867–889, 909–931, 968–990, and 1000–1022; these read LFIL…GIIG, FELL…YLFL, ATII…MYFL, LTLM…VIEN, GEIG…PLLF, FAVT…TPMM, HPWL…YLLI, LWLI…ESFI, LMLT…IGIV, ILMT…GVGA, and MVGG…YLLF. A disordered region spans residues 1032–1052; it reads KNRHRDEDIDSSELLNGQEPQ.

Belongs to the resistance-nodulation-cell division (RND) (TC 2.A.6) family. MdtB subfamily. Part of a tripartite efflux system composed of MdtA, MdtB and MdtC. MdtB forms a heteromultimer with MdtC.

It localises to the cell inner membrane. In Yersinia pestis, this protein is Multidrug resistance protein MdtB.